A 578-amino-acid polypeptide reads, in one-letter code: Proline--tRNA ligase (578 aa).

The protein belongs to the class-II aminoacyl-tRNA synthetase family. ProS type 1 subfamily. In terms of assembly, homodimer.

It is found in the cytoplasm. It catalyses the reaction tRNA(Pro) + L-proline + ATP = L-prolyl-tRNA(Pro) + AMP + diphosphate. Its function is as follows. Catalyzes the attachment of proline to tRNA(Pro) in a two-step reaction: proline is first activated by ATP to form Pro-AMP and then transferred to the acceptor end of tRNA(Pro). As ProRS can inadvertently accommodate and process non-cognate amino acids such as alanine and cysteine, to avoid such errors it has two additional distinct editing activities against alanine. One activity is designated as 'pretransfer' editing and involves the tRNA(Pro)-independent hydrolysis of activated Ala-AMP. The other activity is designated 'posttransfer' editing and involves deacylation of mischarged Ala-tRNA(Pro). The misacylated Cys-tRNA(Pro) is not edited by ProRS. The sequence is that of Proline--tRNA ligase from Syntrophus aciditrophicus (strain SB).